The sequence spans 187 residues: uncharacterized protein (187 aa).

4 helical membrane-spanning segments follow: residues 29-50 (IFID…VYWI), 70-92 (FVIG…INAY), 128-147 (IFFA…SVLR), and 154-176 (LALV…ISYL).

The protein localises to the cell membrane. This is an uncharacterized protein from Archaeoglobus fulgidus (strain ATCC 49558 / DSM 4304 / JCM 9628 / NBRC 100126 / VC-16).